A 142-amino-acid polypeptide reads, in one-letter code: Chorion protein S16 (142 aa).

The signal sequence occupies residues 1–21; the sequence is MSANYMRLLCLMACCLSICLA.

It belongs to the chorion protein S16 family.

It is found in the secreted. Its function is as follows. Chorion membrane (egg shell) protein; plays a role in protecting the egg from the environment. The protein is Chorion protein S16 (Cp16) of Drosophila grimshawi (Hawaiian fruit fly).